Consider the following 545-residue polypeptide: ATP synthase subunit alpha (545 aa).

An ATP-binding site is contributed by 172-179 (GDRKTGKT).

The protein belongs to the ATPase alpha/beta chains family. As to quaternary structure, F-type ATPases have 2 components, CF(1) - the catalytic core - and CF(0) - the membrane proton channel. CF(1) has five subunits: alpha(3), beta(3), gamma(1), delta(1), epsilon(1). CF(0) has three main subunits: a(1), b(2) and c(9-12). The alpha and beta chains form an alternating ring which encloses part of the gamma chain. CF(1) is attached to CF(0) by a central stalk formed by the gamma and epsilon chains, while a peripheral stalk is formed by the delta and b chains.

The protein resides in the cell membrane. It carries out the reaction ATP + H2O + 4 H(+)(in) = ADP + phosphate + 5 H(+)(out). Produces ATP from ADP in the presence of a proton gradient across the membrane. The alpha chain is a regulatory subunit. This is ATP synthase subunit alpha from Corynebacterium urealyticum (strain ATCC 43042 / DSM 7109).